We begin with the raw amino-acid sequence, 198 residues long: Peptidyl-tRNA hydrolase (198 aa).

Position 18 (tyrosine 18) interacts with tRNA. Histidine 23 acts as the Proton acceptor in catalysis. TRNA is bound by residues tyrosine 69, asparagine 71, and asparagine 117.

It belongs to the PTH family. As to quaternary structure, monomer.

The protein resides in the cytoplasm. It carries out the reaction an N-acyl-L-alpha-aminoacyl-tRNA + H2O = an N-acyl-L-amino acid + a tRNA + H(+). Its function is as follows. Hydrolyzes ribosome-free peptidyl-tRNAs (with 1 or more amino acids incorporated), which drop off the ribosome during protein synthesis, or as a result of ribosome stalling. Functionally, catalyzes the release of premature peptidyl moieties from peptidyl-tRNA molecules trapped in stalled 50S ribosomal subunits, and thus maintains levels of free tRNAs and 50S ribosomes. The chain is Peptidyl-tRNA hydrolase from Aeromonas hydrophila subsp. hydrophila (strain ATCC 7966 / DSM 30187 / BCRC 13018 / CCUG 14551 / JCM 1027 / KCTC 2358 / NCIMB 9240 / NCTC 8049).